Reading from the N-terminus, the 386-residue chain is MQMADLEKKLENSVLPPLLKRELSEKILKEEISEEYLVDEIISETIRAYERTLVEPGEAVGVVAAQSIGEPGTQMTMRTFHYAGVAELNVTLGLPRMIEIVDARKEPSTPTMTIYLNDEFKGDREKASMVAKNIESTDVESVSEDISVDLINECITIVLNMHQLESRGLTVADVIESIKSKMKLKIEDHENVLNLKIKTPSLKALRKRLPKVRAIHLKGVQNIKRVIIRKEVDEYILYSEGSNIKEVFDIEGVDTTKTTTNNIVEIQDVLGIEAARNAIIYEMDATLGNQGLTVDKRHLMMVADLMCTDGVVKPIGRHGIGGEKASVLARAAFEETVKHLYSASMRGYVDELGGVVENIIVGKPIAMGTGCIDVCIDKKYEEGKEL.

Belongs to the RNA polymerase beta' chain family. In terms of assembly, part of the RNA polymerase complex.

Its subcellular location is the cytoplasm. It carries out the reaction RNA(n) + a ribonucleoside 5'-triphosphate = RNA(n+1) + diphosphate. Its function is as follows. DNA-dependent RNA polymerase (RNAP) catalyzes the transcription of DNA into RNA using the four ribonucleoside triphosphates as substrates. Forms part of the jaw domain. The protein is DNA-directed RNA polymerase subunit Rpo1C of Methanococcus maripaludis (strain C7 / ATCC BAA-1331).